The following is a 299-amino-acid chain: Probable lipid kinase YegS (299 aa).

One can recognise a DAGKc domain in the interval 2–133 (AEFPASLLIL…IDMAQVNKQT (132 aa)). Residues threonine 40, 66–72 (GDGTINE), and threonine 95 contribute to the ATP site. Residues leucine 215, aspartate 218, and leucine 220 each coordinate Mg(2+). Catalysis depends on glutamate 271, which acts as the Proton acceptor.

Belongs to the diacylglycerol/lipid kinase family. YegS lipid kinase subfamily. Mg(2+) serves as cofactor. It depends on Ca(2+) as a cofactor.

It is found in the cytoplasm. Its function is as follows. Probably phosphorylates lipids; the in vivo substrate is unknown. The protein is Probable lipid kinase YegS of Shigella dysenteriae serotype 1 (strain Sd197).